The sequence spans 209 residues: PF03932 family protein CutC (209 aa).

This sequence belongs to the CutC family.

It is found in the cytoplasm. Its function is as follows. Might participate in the control of copper homeostasis; data from other bacteria suggests it is not involved. This Enterococcus faecalis (strain ATCC 700802 / V583) protein is PF03932 family protein CutC.